A 541-amino-acid chain; its full sequence is Metal transporter Nramp6 (541 aa).

The span at 1-18 (MAPLPAAATATASSAATP) shows a compositional bias: low complexity. Residues 1–44 (MAPLPAAATATASSAATPADDEAHSLLPSTPSNEEDDDDLEERA) are disordered. 12 helical membrane passes run 87–107 (LWLF…PGNL), 120–140 (TLLW…LLAA), 172–192 (VAMV…IKIL), 196–216 (FLPL…FLSL), 224–244 (LEAV…WMFT), 270–290 (AVGV…SALV), 316–336 (IALA…AKGF), 358–378 (FGGG…AAGQ), 404–424 (IRSL…ALFF), 436–456 (WLNV…ITLV), 474–494 (VTWT…LDFF), and 502–522 (LSGS…LYLI).

It belongs to the NRAMP (TC 2.A.55) family.

Its subcellular location is the membrane. In terms of biological role, probable metal transporter. The protein is Metal transporter Nramp6 (NRAMP6) of Oryza sativa subsp. japonica (Rice).